The following is a 270-amino-acid chain: Type III pantothenate kinase (270 aa).

16–23 (EIGNTTAM) contributes to the ATP binding site. Substrate is bound by residues Y106 and 113–116 (GADR). D115 acts as the Proton acceptor in catalysis. Residue D136 coordinates K(+). Residue T139 participates in ATP binding. Residue T191 coordinates substrate.

The protein belongs to the type III pantothenate kinase family. In terms of assembly, homodimer. Requires NH4(+) as cofactor. K(+) serves as cofactor.

Its subcellular location is the cytoplasm. It catalyses the reaction (R)-pantothenate + ATP = (R)-4'-phosphopantothenate + ADP + H(+). It participates in cofactor biosynthesis; coenzyme A biosynthesis; CoA from (R)-pantothenate: step 1/5. Catalyzes the phosphorylation of pantothenate (Pan), the first step in CoA biosynthesis. The chain is Type III pantothenate kinase from Chlorobium luteolum (strain DSM 273 / BCRC 81028 / 2530) (Pelodictyon luteolum).